We begin with the raw amino-acid sequence, 646 residues long: Lipoteichoic acid synthase (646 aa).

The Cytoplasmic segment spans residues 1–7; the sequence is MSSQKKK. Residues 8 to 28 form a helical membrane-spanning segment; it reads ISLFAFFLLTVITITLKTYFS. At 29–43 the chain is on the extracellular side; the sequence is YYVDFSLGVKGLVQN. A helical membrane pass occupies residues 44–64; that stretch reads LILLMNPYSLVALVLSVFLFF. Over 65-68 the chain is Cytoplasmic; it reads KGKK. The helical transmembrane segment at 69-89 threads the bilayer; the sequence is AFWFMFIGGFLLTFLLYANVV. Topologically, residues 90 to 119 are extracellular; the sequence is YFRFFSDFLTFSTLNQVGNVESMGGAVSAS. A helical membrane pass occupies residues 120-140; that stretch reads FKWYDFVYFIDTLVYLFILIF. Residues 141 to 153 lie on the Cytoplasmic side of the membrane; sequence KTKWLDTKAFSKK. Residues 154–174 form a helical membrane-spanning segment; it reads FVPVVMAASVALFFLNLAFAE. Topologically, residues 175 to 646 are extracellular; sequence TDRPELLTRT…ETGPKANSKK (472 aa). Residues glutamate 255 and threonine 300 each coordinate Mn(2+). Residue threonine 300 is part of the active site. Histidine 416 contributes to the substrate binding site. 2 residues coordinate Mn(2+): aspartate 475 and histidine 476. Residues 623 to 638 show a composition bias toward basic and acidic residues; it reads NPDFKKVNPSKYKYET. Positions 623–646 are disordered; the sequence is NPDFKKVNPSKYKYETGPKANSKK.

It belongs to the LTA synthase family. In terms of processing, proteolytically cleaved.

The protein resides in the cell membrane. It localises to the secreted. It participates in cell wall biogenesis; lipoteichoic acid biosynthesis. Catalyzes the polymerization of lipoteichoic acid (LTA) polyglycerol phosphate, a reaction that presumably uses phosphatidylglycerol (PG) as substrate. Is required for staphylococcal growth and cell division process. The polypeptide is Lipoteichoic acid synthase (ltaS) (Staphylococcus aureus (strain bovine RF122 / ET3-1)).